An 822-amino-acid chain; its full sequence is MGDLKSGFEEVDGVRLGYLIIKGKQMFALSQVFTDLLKNIPRTTVHKRMDHLKVKKHHCDLEELRKLKAINSIAFHAAKCTLISREDVEALYTSCKTERVLKTKRRRVGRALATKAPPPERAAAASPRPAFWKDKHQLWRGLSGAARPLPISAQSQRPGAAAARPAAHLPQIFSKYPGSHYPEIVRSPCKSSLNYETAQLQGNYVAFHSDPAYFRSLLCSKHPAAAGATCLERFHLVNSFCPPPHHHHHHHHHHHHHHHRAQQPTPSHHPSHHHRPQPHLGSFPESCSSDSESSSYSDHAANDSDFGSSLSSSSNSVSSEEEEEEGEEEEEEEEEEEGGSGASDSSEISSEEEDSSTESDSSSGSSQVSVQSIRFRRTSFCKPPSVQAQANFLYHLASAAAATKPAAFEDAGRLPDLKSSVKAESPEEWSLQSWAPKGTPVYCPASLGSCFPEIRNDRVSEITFPHSEISSTVKRTDLTINCHAEGASSPSPKTNNVFPQQRILREARKCLQATPTTHCAENSTIAARFLNNDSCGTTANSGKDSKIPHCPEFATDLPSLQSDPRVDTATAAAAAAAATKAESLCTGTGDKTLPFLHNIKIKVEDSSANEEYEPELITNKLKWECNDAEGEFYNMTEKKEEDALVPTAKEGFACPEKETPSLNPLAQSQGLSCTLGSPKPEDGEYKFGARVRKNYRTLVLGKRPVLQTPPVKPNLKSARSPRPTGKTETHEGTLDDFTVLNRRKKVASNVASAVKRPFNFMANFPCPPSLIIGKDGDLWPAYSLNTTKDSQPPHKAHPIWKWQLGGSAIPLPPSHKFRKFNS.

The segment covering 245–261 (HHHHHHHHHHHHHHHRA) has biased composition (basic residues). The tract at residues 245–370 (HHHHHHHHHH…SSSGSSQVSV (126 aa)) is disordered. Positions 278 to 318 (PHLGSFPESCSSDSESSSYSDHAANDSDFGSSLSSSSNSVS) are enriched in low complexity. Positions 319 to 338 (SEEEEEEGEEEEEEEEEEEG) are enriched in acidic residues. Lys602 participates in a covalent cross-link: Glycyl lysine isopeptide (Lys-Gly) (interchain with G-Cter in SUMO2). Disordered stretches follow at residues 658 to 677 (ETPS…TLGS) and 706 to 732 (LQTP…THEG). The span at 660–675 (PSLNPLAQSQGLSCTL) shows a compositional bias: polar residues.

It belongs to the DACH/dachshund family.

The chain is SKI/DACH domain-containing protein 1 (Skida1) from Mus musculus (Mouse).